Consider the following 81-residue polypeptide: Protein RADIALIS-like 3 (81 aa).

An SANT domain is found at 7 to 62 (SSSASWTRKENKLFERALATYDQDTPDRWHNVARAVGGKSAEEVRRHYELLIRDVN).

As to expression, expressed just outside the vascular bundles in the rosette stem and the leaf traces. Not detected in floral primordia.

It localises to the nucleus. In terms of biological role, probable transcription factor. The protein is Protein RADIALIS-like 3 (RL3) of Arabidopsis thaliana (Mouse-ear cress).